Consider the following 512-residue polypeptide: 2,3-bisphosphoglycerate-independent phosphoglycerate mutase (512 aa).

Positions 18 and 68 each coordinate Mn(2+). The Phosphoserine intermediate role is filled by Ser68. Substrate-binding positions include His129, 159–160, Arg191, Arg197, 265–268, and Lys338; these read RD and RPDR. The Mn(2+) site is built by Asp403, His407, Asp444, His445, and His462.

Belongs to the BPG-independent phosphoglycerate mutase family. Monomer. Mn(2+) is required as a cofactor.

The catalysed reaction is (2R)-2-phosphoglycerate = (2R)-3-phosphoglycerate. Its pathway is carbohydrate degradation; glycolysis; pyruvate from D-glyceraldehyde 3-phosphate: step 3/5. Its function is as follows. Catalyzes the interconversion of 2-phosphoglycerate and 3-phosphoglycerate. This Mesomycoplasma hyopneumoniae (strain 232) (Mycoplasma hyopneumoniae) protein is 2,3-bisphosphoglycerate-independent phosphoglycerate mutase.